Here is a 352-residue protein sequence, read N- to C-terminus: RING finger protein 39 (352 aa).

An RING-type zinc finger spans residues 20-67 (CPLCGGPFEDPVLLACEHSFCRSCLARCWGSPAAPGSEEATPSCPCCG). Residues 98-118 (PGARTGRRRGGRIPTMGCLDP) form a disordered region. One can recognise a B30.2/SPRY domain in the interval 142–352 (EDLPEDYPVV…APLRIVPGEA (211 aa)).

As to expression, expressed in the hippocampus. Expression is rapidly up-regulated in granule cells of the dentate gyrus after LTP induction.

The protein localises to the cytoplasm. It catalyses the reaction S-ubiquitinyl-[E2 ubiquitin-conjugating enzyme]-L-cysteine + [acceptor protein]-L-lysine = [E2 ubiquitin-conjugating enzyme]-L-cysteine + N(6)-ubiquitinyl-[acceptor protein]-L-lysine.. It participates in protein modification; protein ubiquitination. In terms of biological role, plays an inhibitory role in anti-RNA viral innate immunity by targeting the adapter DDX3X and promoting its 'Lys-48'-linked polyubiquitination. Alternatively, enhances the cGAS-STING pathway activation by promoting 'Lys-63'-linked ubiquitination of STING1, facilitating the STING1-TBK1 complex formation and STING1 activation. The sequence is that of RING finger protein 39 (Rnf39) from Rattus norvegicus (Rat).